A 232-amino-acid polypeptide reads, in one-letter code: 5'-methylthioadenosine/S-adenosylhomocysteine nucleosidase (232 aa).

Catalysis depends on Glu-12, which acts as the Proton acceptor. Substrate is bound by residues Gly-78, Ile-152, and 173–174 (ME). The Proton donor role is filled by Asp-197.

This sequence belongs to the PNP/UDP phosphorylase family. MtnN subfamily. In terms of assembly, homodimer.

It catalyses the reaction S-adenosyl-L-homocysteine + H2O = S-(5-deoxy-D-ribos-5-yl)-L-homocysteine + adenine. The catalysed reaction is S-methyl-5'-thioadenosine + H2O = 5-(methylsulfanyl)-D-ribose + adenine. It carries out the reaction 5'-deoxyadenosine + H2O = 5-deoxy-D-ribose + adenine. The protein operates within amino-acid biosynthesis; L-methionine biosynthesis via salvage pathway; S-methyl-5-thio-alpha-D-ribose 1-phosphate from S-methyl-5'-thioadenosine (hydrolase route): step 1/2. In terms of biological role, catalyzes the irreversible cleavage of the glycosidic bond in both 5'-methylthioadenosine (MTA) and S-adenosylhomocysteine (SAH/AdoHcy) to adenine and the corresponding thioribose, 5'-methylthioribose and S-ribosylhomocysteine, respectively. Also cleaves 5'-deoxyadenosine, a toxic by-product of radical S-adenosylmethionine (SAM) enzymes, into 5-deoxyribose and adenine. Thus, is required for in vivo function of the radical SAM enzymes biotin synthase and lipoic acid synthase, that are inhibited by 5'-deoxyadenosine accumulation. The sequence is that of 5'-methylthioadenosine/S-adenosylhomocysteine nucleosidase from Escherichia coli O7:K1 (strain IAI39 / ExPEC).